Consider the following 304-residue polypeptide: Transcription factor BEE 2 (304 aa).

The interval 74-132 is disordered; that stretch reads FHMEPVKNNGHSRAITLQNKRKPEGKTEKREKKKIKAEDETEPSMKGKSNMSNTETSSE. Positions 82-91 are enriched in polar residues; sequence NGHSRAITLQ. Over residues 94 to 103 the composition is skewed to basic and acidic residues; that stretch reads RKPEGKTEKR. Residues 120–132 are compositionally biased toward polar residues; it reads GKSNMSNTETSSE. The 51-residue stretch at 147 to 197 folds into the bHLH domain; the sequence is EATDRHSLAERARREKISKKMKCLQDIVPGCNKVTGKAGMLDEIINYVQSL.

In terms of assembly, homodimer. In terms of tissue distribution, expressed in stems and flowers.

It is found in the nucleus. In terms of biological role, positive regulator of brassinosteroid signaling. The sequence is that of Transcription factor BEE 2 (BEE2) from Arabidopsis thaliana (Mouse-ear cress).